Here is a 46-residue protein sequence, read N- to C-terminus: Large ribosomal subunit protein bL36A (46 aa).

Belongs to the bacterial ribosomal protein bL36 family.

The sequence is that of Large ribosomal subunit protein bL36A from Sodalis glossinidius (strain morsitans).